A 215-amino-acid polypeptide reads, in one-letter code: Adenylate kinase (215 aa).

ATP is bound at residue 10-15 (GAGKGT). The tract at residues 30 to 59 (STGDMLRAAVKAGTELGLKAKSVMDAGGLV) is NMP. Residues T31, R36, 57 to 59 (GLV), 85 to 88 (GFPR), and Q92 contribute to the AMP site. The interval 122–159 (GRRVHPASGRVYHTEYNPPKVAGKDDVSGEELVQREDD) is LID. Residues R123 and 132-133 (VY) contribute to the ATP site. Positions 156 and 167 each coordinate AMP. Position 201 (G201) interacts with ATP.

Belongs to the adenylate kinase family. Monomer.

It is found in the cytoplasm. It catalyses the reaction AMP + ATP = 2 ADP. Its pathway is purine metabolism; AMP biosynthesis via salvage pathway; AMP from ADP: step 1/1. Catalyzes the reversible transfer of the terminal phosphate group between ATP and AMP. Plays an important role in cellular energy homeostasis and in adenine nucleotide metabolism. This chain is Adenylate kinase, found in Ectopseudomonas mendocina (strain ymp) (Pseudomonas mendocina).